Reading from the N-terminus, the 314-residue chain is Melanoma-associated antigen 2 (314 aa).

The segment covering 1–20 (MPLEQRSQHCKPEEGLEARG) has biased composition (basic and acidic residues). The interval 1-69 (MPLEQRSQHC…SPPHSPQGAS (69 aa)) is disordered. A compositionally biased stretch (low complexity) spans 21–44 (EALGLVGAQAPATEEQQTASSSST). Residue Ser-64 is modified to Phosphoserine. In terms of domain architecture, MAGE spans 109–308 (ISRKMVELVH…ISYPPLHERA (200 aa)).

In terms of assembly, interacts with TRIM28 and UBE2H. Interacts with HDAC3. Interacts with PML (isoform PML-1, isoform PML-2, isoform PML-3, isoform PML-4 and isoform PML-5). As to expression, expressed in many tumors of several types, such as melanoma, head and neck squamous cell carcinoma, lung carcinoma and breast carcinoma, but not in normal tissues except for testes.

Its subcellular location is the nucleus. It is found in the PML body. Reduces p53/TP53 transactivation function through recruitment of HDAC3 to p53/TP53 transcription sites. Also represses p73/TP73 activity. Proposed to enhance ubiquitin ligase activity of RING-type zinc finger-containing E3 ubiquitin-protein ligases. In vitro enhances ubiquitin ligase activity of TRIM28 and stimulates p53/TP53 ubiquitination by TRIM28 potentially in presence of Ubl-conjugating enzyme UBE2H. Proposed to act through recruitment and/or stabilization of the Ubl-conjugating enzyme (E2) at the E3:substrate complex. May play a role in embryonal development and tumor transformation or aspects of tumor progression. In vitro promotes cell viability in melanoma cell lines. Antigen recognized on a melanoma by autologous cytolytic T-lymphocytes. Negatively regulates acetylation and sumoylation of PML and represses PML-induced p53/TP53 acetylation and activation. This Homo sapiens (Human) protein is Melanoma-associated antigen 2 (MAGEA2).